A 563-amino-acid chain; its full sequence is (-)-germacrene D synthase (563 aa).

A coiled-coil region spans residues 44–71; the sequence is TEITAAEKEELEKQKEKVKNLLDQTPND. Residues Asp314 and Asp318 each coordinate Mn(2+). Positions 314-318 match the DDXXD motif motif; the sequence is DDIYD. 2 homodimerization regions span residues 320 to 326 and 392 to 429; these read YGSLDEL and EAEW…VGME. Residues Asp459 and Glu467 each coordinate Mn(2+).

This sequence belongs to the terpene synthase family. Homodimer. The cofactor is Mn(2+). Mg(2+) serves as cofactor. As to expression, expressed in peltate glandular trichomes. Present at low levels in flowers, leaves and stems.

It carries out the reaction (2E,6E)-farnesyl diphosphate = (-)-germacrene D + diphosphate. It functions in the pathway secondary metabolite biosynthesis; terpenoid biosynthesis. In terms of biological role, involved in the biosynthesis of phenolic sesquiterpenes natural products. Sesquiterpene synthase that catalyzes mainly the formation of (-)-germacrene D and minor amounts of other sesquiterpenes (e.g. bicyclo-germacrene) from farnesyl diphosphate (FPP). Also triggers moderate amounts formation of myrcene, limonene, terpinolene and linalool in the presence of geranyl diphosphate (GPP). This Origanum vulgare (Wild marjoram) protein is (-)-germacrene D synthase.